The sequence spans 651 residues: Cytoplasmic tyrosine-protein kinase BMX (651 aa).

A PH domain is found at 4–111; the sequence is KSILEELLLK…WLKALQKEIR (108 aa). A Btk-type zinc finger spans residues 113-149; it reads NPHLLIKYHSGFFVDGKFLCCQQSCKAAPGCTLWEAY. His-121, Cys-132, Cys-133, and Cys-143 together coordinate Zn(2+). One can recognise an SH2 domain in the interval 272–368; the sequence is WFAGNISRSQ…GMITRLRHPV (97 aa). In terms of domain architecture, Protein kinase spans 393 to 646; sequence ITLLKELGNG…QLLSAIEPLR (254 aa). ATP is bound by residues 399–407 and Lys-421; that span reads LGNGQFGVV. Catalysis depends on Asp-512, which acts as the Proton acceptor. Position 542 is a phosphotyrosine; by SRC and autocatalysis (Tyr-542).

Belongs to the protein kinase superfamily. Tyr protein kinase family. TEC subfamily. In terms of assembly, interacts with BCAR1, CAV1, MYD88, PTK2/FAK1, RUFY1, RUFY2, STAT3, TIRAP and TNFRSF1B. Zn(2+) is required as a cofactor. In terms of processing, phosphorylated in response to protein I/II and to LPS. Phosphorylation at Tyr-542 by SRC and by autocatalysis leads to activation and is required for STAT3 phosphorylation by BMX. In terms of tissue distribution, specifically expressed in the endocardium of the developing heart as well as in the endocardium of the left ventricle and in the endothelium of large arteries in adult mice.

It localises to the cytoplasm. It catalyses the reaction L-tyrosyl-[protein] + ATP = O-phospho-L-tyrosyl-[protein] + ADP + H(+). TEK and vascular endothelial growth factor receptor 1 (FLT1) stimulate BMX tyrosine kinase activity. Activated by integrins through the mediation of PTK2/FAK1. Activated by TNF through the mediation of TNFRSF1B. Functionally, non-receptor tyrosine kinase that plays central but diverse modulatory roles in various signaling processes involved in the regulation of actin reorganization, cell migration, cell proliferation and survival, cell adhesion, and apoptosis. Participates in signal transduction stimulated by growth factor receptors, cytokine receptors, G-protein coupled receptors, antigen receptors and integrins. Induces tyrosine phosphorylation of BCAR1 in response to integrin regulation. Activation of BMX by integrins is mediated by PTK2/FAK1, a key mediator of integrin signaling events leading to the regulation of actin cytoskeleton and cell motility. Plays a critical role in TNF-induced angiogenesis, and implicated in the signaling of TEK and FLT1 receptors, 2 important receptor families essential for angiogenesis. Required for the phosphorylation and activation of STAT3, a transcription factor involved in cell differentiation. Also involved in interleukin-6 (IL6) induced differentiation. Also plays a role in programming adaptive cytoprotection against extracellular stress in different cell systems, salivary epithelial cells, brain endothelial cells, and dermal fibroblasts. May be involved in regulation of endocytosis through its interaction with an endosomal protein RUFY1. May also play a role in the growth and differentiation of hematopoietic cells; as well as in signal transduction in endocardial and arterial endothelial cells. In Mus musculus (Mouse), this protein is Cytoplasmic tyrosine-protein kinase BMX (Bmx).